Here is a 100-residue protein sequence, read N- to C-terminus: uncharacterized protein (100 aa).

Positions 40–100 (GDQMARKATS…DPTKNKSGRG (61 aa)) are disordered.

This is an uncharacterized protein from Mycobacterium tuberculosis (strain ATCC 25618 / H37Rv).